The sequence spans 168 residues: Crossover junction endodeoxyribonuclease RuvC (168 aa).

Residues D9, E70, and D145 contribute to the active site. Positions 9, 70, and 145 each coordinate Mg(2+).

The protein belongs to the RuvC family. In terms of assembly, homodimer which binds Holliday junction (HJ) DNA. The HJ becomes 2-fold symmetrical on binding to RuvC with unstacked arms; it has a different conformation from HJ DNA in complex with RuvA. In the full resolvosome a probable DNA-RuvA(4)-RuvB(12)-RuvC(2) complex forms which resolves the HJ. It depends on Mg(2+) as a cofactor.

It localises to the cytoplasm. The enzyme catalyses Endonucleolytic cleavage at a junction such as a reciprocal single-stranded crossover between two homologous DNA duplexes (Holliday junction).. Functionally, the RuvA-RuvB-RuvC complex processes Holliday junction (HJ) DNA during genetic recombination and DNA repair. Endonuclease that resolves HJ intermediates. Cleaves cruciform DNA by making single-stranded nicks across the HJ at symmetrical positions within the homologous arms, yielding a 5'-phosphate and a 3'-hydroxyl group; requires a central core of homology in the junction. The consensus cleavage sequence is 5'-(A/T)TT(C/G)-3'. Cleavage occurs on the 3'-side of the TT dinucleotide at the point of strand exchange. HJ branch migration catalyzed by RuvA-RuvB allows RuvC to scan DNA until it finds its consensus sequence, where it cleaves and resolves the cruciform DNA. This chain is Crossover junction endodeoxyribonuclease RuvC, found in Chlamydia felis (strain Fe/C-56) (Chlamydophila felis).